A 376-amino-acid chain; its full sequence is N-acetyldiaminopimelate deacetylase (376 aa).

The active site involves aspartate 69. Catalysis depends on glutamate 128, which acts as the Proton acceptor.

The protein belongs to the peptidase M20A family. N-acetyldiaminopimelate deacetylase subfamily.

The enzyme catalyses N-acetyl-(2S,6S)-2,6-diaminopimelate + H2O = (2S,6S)-2,6-diaminopimelate + acetate. It participates in amino-acid biosynthesis; L-lysine biosynthesis via DAP pathway; LL-2,6-diaminopimelate from (S)-tetrahydrodipicolinate (acetylase route): step 3/3. Its function is as follows. Catalyzes the conversion of N-acetyl-diaminopimelate to diaminopimelate and acetate. The sequence is that of N-acetyldiaminopimelate deacetylase from Streptococcus pneumoniae (strain JJA).